Reading from the N-terminus, the 343-residue chain is Signaling lymphocytic activation molecule (343 aa).

The signal sequence occupies residues 1–24 (MDPKGSLSWRILLFLSLAFELSYG). Residues 25-242 (TGGGVMDCPV…KQESSSESSP (218 aa)) are Extracellular-facing. The region spanning 29-138 (VMDCPVILQK…VQQFCKQLKL (110 aa)) is the Ig-like V-type domain. N-linked (GlcNAc...) asparagine glycosylation is found at Asn54, Asn58, Asn103, Asn126, Asn151, Asn158, Asn192, Asn211, and Asn226. The Ig-like C2-type domain occupies 145–228 (PEIKVLNKTQ…SSISRTFNLS (84 aa)). Disulfide bonds link Cys161-Cys232 and Cys167-Cys212. Residues 243 to 265 (WMQYTLVPLGVVIIFILVFTAII) form a helical membrane-spanning segment. Over 266 to 343 (MMKRQGKSNH…VYASVTLPES (78 aa)) the chain is Cytoplasmic. The ITSM 1 signature appears at 286–291 (TIYAQV). Residues Tyr288, Tyr315, and Tyr335 each carry the phosphotyrosine; by FYN modification. The short motif at 313 to 318 (TIYVAA) is the SH2-binding element. The segment at 320 to 343 (EPAPESVQEPNPTTVYASVTLPES) is disordered. Polar residues predominate over residues 327 to 343 (QEPNPTTVYASVTLPES). An ITSM 2 motif is present at residues 333–338 (TVYASV).

Interacts (via cytoplasmic domain) with SH2D1A and SH2D1B; SH2D1A mediates association with FYN; SH2D1A binds to phosphorylated and not phosphorylated ITSM 1. Interacts (via cytoplasmic domain phosphorylated on tyrosine residues) with INPP5D and PTPN11; presence of SH2D1A facilitates binding to INPP5D. Interacts with MAP4K1. Interacts with PIK3C3, BECN1 and UVRAG; indicative for an association with PI3K complex II (PI3KC3-C2). Post-translationally, phosphorylated on tyrosine residues by FYN.

The protein localises to the cell membrane. Its function is as follows. Self-ligand receptor of the signaling lymphocytic activation molecule (SLAM) family. SLAM receptors triggered by homo- or heterotypic cell-cell interactions are modulating the activation and differentiation of a wide variety of immune cells and thus are involved in the regulation and interconnection of both innate and adaptive immune response. Activities are controlled by presence or absence of small cytoplasmic adapter proteins, SH2D1A/SAP and/or SH2D1B/EAT-2. SLAMF1-induced signal-transduction events in T-lymphocytes are different from those in B-cells. Two modes of SLAMF1 signaling seem to exist: one depending on SH2D1A (and perhaps SH2D1B) and another in which protein-tyrosine phosphatase 2C (PTPN11)-dependent signal transduction operates. Initially it has been proposed that association with SH2D1A prevents binding to inhibitory effectors including INPP5D/SHIP1 and PTPN11/SHP-2. However, signaling is also regulated by SH2D1A which can simultaneously interact with and recruit FYN which subsequently phosphorylates and activates SLAMF1. Mediates IL-2-independent proliferation of activated T-cells during immune responses and induces IFN-gamma production. Downstreaming signaling involves INPP5D, DOK1 and DOK2 leading to inhibited IFN-gamma production in T-cells, and PRKCQ, BCL10 and NFKB1 leading to increased T-cell activation and Th2 cytokine production. Promotes T-cell receptor-induced IL-4 secretion by CD4(+) cells. Inhibits antigen receptor-mediated production of IFN-gamma, but not IL-2, in CD4(-)/CD8(-) T-cells. Required for IL-4 production by germinal centers T follicular helper (T(Fh))cells. May inhibit CD40-induced signal transduction in monocyte-derived dendritic cells. May play a role in allergic responses and may regulate allergen-induced Th2 cytokine and Th1 cytokine secretion. In conjunction with SLAMF6 controls the transition between positive selection and the subsequent expansion and differentiation of the thymocytic natural killer T (NKT) cell lineage. Involved in the peripheral differentiation of indifferent natural killer T (iNKT) cells toward a regulatory NKT2 type. In macrophages involved in down-regulation of IL-12, TNF-alpha and nitric oxide in response to lipopolysaccharide (LPS). In B-cells activates the ERK signaling pathway independently of SH2D1A but implicating both, SYK and INPP5D, and activates Akt signaling dependent on SYK and SH2D1A. In conjunction with CD84/SLAMF5 and SLAMF6 may be a negative regulator of the humoral immune response. (Microbial infection) Involved in innate immune response against Gram-negative bacteria in macrophages; probably recognizes OmpC and/or OmpF on the bacterial surface, regulates phagosome maturation and recruitment of the PI3K complex II (PI3KC3-C2) leading to accumulated of PdtIns(3)P and NOX2 activity in the phagosomes. The polypeptide is Signaling lymphocytic activation molecule (Slamf1) (Mus musculus (Mouse)).